The chain runs to 473 residues: Trigger factor (473 aa).

Residues glycine 162–proline 243 form the PPIase FKBP-type domain. Residues threonine 433–lysine 473 form a disordered region. Residues alanine 444 to lysine 473 show a composition bias toward acidic residues.

The protein belongs to the FKBP-type PPIase family. Tig subfamily.

The protein resides in the cytoplasm. It catalyses the reaction [protein]-peptidylproline (omega=180) = [protein]-peptidylproline (omega=0). In terms of biological role, involved in protein export. Acts as a chaperone by maintaining the newly synthesized protein in an open conformation. Functions as a peptidyl-prolyl cis-trans isomerase. The protein is Trigger factor of Mycolicibacterium vanbaalenii (strain DSM 7251 / JCM 13017 / BCRC 16820 / KCTC 9966 / NRRL B-24157 / PYR-1) (Mycobacterium vanbaalenii).